Reading from the N-terminus, the 119-residue chain is Large ribosomal subunit protein uL22 (119 aa).

This sequence belongs to the universal ribosomal protein uL22 family. As to quaternary structure, part of the 50S ribosomal subunit.

Its function is as follows. This protein binds specifically to 23S rRNA; its binding is stimulated by other ribosomal proteins, e.g. L4, L17, and L20. It is important during the early stages of 50S assembly. It makes multiple contacts with different domains of the 23S rRNA in the assembled 50S subunit and ribosome. Functionally, the globular domain of the protein is located near the polypeptide exit tunnel on the outside of the subunit, while an extended beta-hairpin is found that lines the wall of the exit tunnel in the center of the 70S ribosome. This chain is Large ribosomal subunit protein uL22, found in Rickettsia bellii (strain OSU 85-389).